The chain runs to 128 residues: MQRHMLKSKIHRAAVTHCELHYEGSCAIDEDLLEAANIVENERIDIWNINNGERFSTYAIKGERGSGMISLNGSAARRAQLGDLVIIAAFAMIDEQELKAGWKPDLVFVDEDNKIKGSRDHVPTQNWT.

The active-site Schiff-base intermediate with substrate; via pyruvic acid is the S25. S25 is modified (pyruvic acid (Ser)). A substrate-binding site is contributed by T57. The active-site Proton donor is Y58. Substrate is bound at residue 73–75; it reads GSA.

It belongs to the PanD family. In terms of assembly, heterooctamer of four alpha and four beta subunits. Pyruvate is required as a cofactor. In terms of processing, is synthesized initially as an inactive proenzyme, which is activated by self-cleavage at a specific serine bond to produce a beta-subunit with a hydroxyl group at its C-terminus and an alpha-subunit with a pyruvoyl group at its N-terminus.

It localises to the cytoplasm. It catalyses the reaction L-aspartate + H(+) = beta-alanine + CO2. It participates in cofactor biosynthesis; (R)-pantothenate biosynthesis; beta-alanine from L-aspartate: step 1/1. Its function is as follows. Catalyzes the pyruvoyl-dependent decarboxylation of aspartate to produce beta-alanine. This chain is Aspartate 1-decarboxylase, found in Burkholderia pseudomallei (strain 668).